The sequence spans 297 residues: Cyclin-dependent kinase 1 (297 aa).

Methionine 1 is subject to N-acetylmethionine. Tyrosine 4 carries the phosphotyrosine; by PKR modification. Positions 4 to 287 (YTKIEKIGEG…GKMALNHPYF (284 aa)) constitute a Protein kinase domain. An N6-acetyllysine; alternate mark is found at lysine 6 and lysine 9. Residues lysine 6 and lysine 9 each participate in a glycyl lysine isopeptide (Lys-Gly) (interchain with G-Cter in SUMO2); alternate cross-link. 10-18 (IGEGTYGVV) provides a ligand contact to ATP. Threonine 14 carries the phosphothreonine; by PKMYT1 modification. Position 15 is a phosphotyrosine; by PKMYT1, WEE1, WEE2 and PKC/PRKCD (tyrosine 15). Tyrosine 19 carries the phosphotyrosine modification. Lysine 20 is covalently cross-linked (Glycyl lysine isopeptide (Lys-Gly) (interchain with G-Cter in SUMO2)). ATP is bound at residue lysine 33. Serine 39 is subject to Phosphoserine. Phosphotyrosine is present on tyrosine 77. The active-site Proton acceptor is aspartate 128. Lysine 139 participates in a covalent cross-link: Glycyl lysine isopeptide (Lys-Gly) (interchain with G-Cter in SUMO2). Position 141 is a phosphothreonine (threonine 141). Residue threonine 161 is modified to Phosphothreonine; by CAK. At serine 178 the chain carries Phosphoserine. Threonine 222 carries the post-translational modification Phosphothreonine. At lysine 245 the chain carries N6-succinyllysine. Serine 248 carries the post-translational modification Phosphoserine.

It belongs to the protein kinase superfamily. CMGC Ser/Thr protein kinase family. CDC2/CDKX subfamily. As to quaternary structure, forms a stable but non-covalent complex with a regulatory subunit and with a cyclin. The cyclin subunit imparts substrate specificity to the complex. Interacts with cyclins-B (CCNB1, CCNB2 and CCNB3) to form a serine/threonine kinase holoenzyme complex also known as maturation promoting factor (MPF). Promotes G2-M transition when in complex with a cyclin-B. Can also form CDK1-cylin-D and CDK1-cyclin-E complexes that phosphorylate RB1 in vitro. Associates with cyclins-A and B1 during S-phase in regenerating hepatocytes. Interacts with DLGAP5. Binds to the CDK inhibitors CDKN1A/p21 and CDKN1B/p27. Interacts with catalytically active CCNB1 and RALBP1 during mitosis to form an endocytotic complex during interphase. Interacts with FANCC. Interacts with CEP63; this interaction recruits CDK1 to centrosomes. Interacts with CENPA. Interacts with NR1D1. Interacts with proteasome subunit PSMA8; to participate in meiosis progression during spermatogenesis. In terms of assembly, unable to complex with cyclin-B1 and also fails to bind to CDKN1A/p21. (Microbial infection) Interacts with severe fever with thrombocytopenia syndrome virus (SFTSV) NSs; this interaction is inclusion body dependent, it inhibits the formation and nuclear import of the cyclin B1-CDK1 complex and leads to cell cycle arrest. Phosphorylation at Thr-161 by CAK/CDK7 activates kinase activity. Phosphorylation at Thr-14 and Tyr-15 by PKMYT1 prevents nuclear translocation. Phosphorylation at Tyr-15 by WEE1 and WEE2 inhibits the protein kinase activity and acts as a negative regulator of entry into mitosis (G2 to M transition). Phosphorylation by PKMYT1 and WEE1 takes place during mitosis to keep CDK1-cyclin-B complexes inactive until the end of G2. By the end of G2, PKMYT1 and WEE1 are inactivated, but CDC25A and CDC25B are activated. Dephosphorylation by active CDC25A and CDC25B at Thr-14 and Tyr-15, leads to CDK1 activation at the G2-M transition. Phosphorylation at Tyr-15 by WEE2 during oogenesis is required to maintain meiotic arrest in oocytes during the germinal vesicle (GV) stage, a long period of quiescence at dictyate prophase I, leading to prevent meiotic reentry. Phosphorylation by WEE2 is also required for metaphase II exit during egg activation to ensure exit from meiosis in oocytes and promote pronuclear formation. Phosphorylated at Tyr-4 by PKR/EIF2AK2 upon genotoxic stress. This phosphorylation triggers CDK1 polyubiquitination and subsequent proteolysis, thus leading to G2 arrest. In response to UV irradiation, phosphorylation at Tyr-15 by PRKCD activates the G2/M DNA damage checkpoint. Post-translationally, polyubiquitinated upon genotoxic stress. In terms of tissue distribution, found in breast cancer tissues.

The protein resides in the nucleus. The protein localises to the cytoplasm. It localises to the mitochondrion. It is found in the cytoskeleton. Its subcellular location is the microtubule organizing center. The protein resides in the centrosome. The protein localises to the spindle. The enzyme catalyses L-seryl-[protein] + ATP = O-phospho-L-seryl-[protein] + ADP + H(+). The catalysed reaction is L-threonyl-[protein] + ATP = O-phospho-L-threonyl-[protein] + ADP + H(+). It catalyses the reaction [DNA-directed RNA polymerase] + ATP = phospho-[DNA-directed RNA polymerase] + ADP + H(+). Its activity is regulated as follows. Phosphorylation at Thr-14 or Tyr-15 inactivates the enzyme, while phosphorylation at Thr-161 activates it. Activated through a multistep process; binding to cyclin-B is required for relocation of cyclin-kinase complexes to the nucleus, activated by CAK/CDK7-mediated phosphorylation on Thr-161, and CDC25-mediated dephosphorylation of inhibitory phosphorylation on Thr-14 and Tyr-15. Activity is restricted during S-phase in an ATR-dependent manner to prevent premature entry into G2. Repressed by the CDK inhibitors CDKN1A/p21 and CDKN1B/p27 during the G1 phase and by CDKN1A/p21 at the G1-S checkpoint upon DNA damage. Transient activation by rapid and transient dephosphorylation at Tyr-15 triggered by TGFB1. Inhibited by flavopiridol and derivatives, pyrimidine derivatives, pyridine derivatives, purine derivatives, staurosporine, paullones, oxoindoles, indazole analogs, indolin-2-ones, pyrazolo[3,4-b]pyridines, imidazo[1,2-a]pyridine (AZ703), thiazolinone analogs(RO-3306), thiazol urea, macrocyclic quinoxalin-2-one, pyrrolo[2,3-a]carbazole, pyrazolo[1,5-a]-1,3,5-triazine, pyrazolo[1,5-a]pyrimidine (Dinaciclib, SCH 727965), 2-(1-ethyl-2-hydroxyethylamino)-6-benzylamino-9-isopropylpurine (roscovitine), olomoucine, AG-024322, AT-7519, P276-00, R547/Ro-4584820 and SNS-032/BMS-387032. In terms of biological role, plays a key role in the control of the eukaryotic cell cycle by modulating the centrosome cycle as well as mitotic onset; promotes G2-M transition via association with multiple interphase cyclins. Phosphorylates PARVA/actopaxin, APC, AMPH, APC, BARD1, Bcl-xL/BCL2L1, BRCA2, CALD1, CASP8, CDC7, CDC20, CDC25A, CDC25C, CC2D1A, CENPA, CSNK2 proteins/CKII, FZR1/CDH1, CDK7, CEBPB, CHAMP1, DMD/dystrophin, EEF1 proteins/EF-1, EZH2, KIF11/EG5, EGFR, FANCG, FOS, GFAP, GOLGA2/GM130, GRASP1, UBE2A/hHR6A, HIST1H1 proteins/histone H1, HMGA1, HIVEP3/KRC, KAT5, LMNA, LMNB, LBR, MKI67, LATS1, MAP1B, MAP4, MARCKS, MCM2, MCM4, MKLP1, MLST8, MYB, NEFH, NFIC, NPC/nuclear pore complex, PITPNM1/NIR2, NPM1, NCL, NUCKS1, NPM1/numatrin, ORC1, PRKAR2A, EEF1E1/p18, EIF3F/p47, p53/TP53, NONO/p54NRB, PAPOLA, PLEC/plectin, RB1, TPPP, UL40/R2, RAB4A, RAP1GAP, RBBP8/CtIP, RCC1, RPS6KB1/S6K1, KHDRBS1/SAM68, ESPL1, SKI, BIRC5/survivin, STIP1, TEX14, beta-tubulins, MAPT/TAU, NEDD1, VIM/vimentin, TK1, FOXO1, RUNX1/AML1, SAMHD1, SIRT2, CGAS and RUNX2. CDK1/CDC2-cyclin-B controls pronuclear union in interphase fertilized eggs. Essential for early stages of embryonic development. During G2 and early mitosis, CDC25A/B/C-mediated dephosphorylation activates CDK1/cyclin complexes which phosphorylate several substrates that trigger at least centrosome separation, Golgi dynamics, nuclear envelope breakdown and chromosome condensation. Once chromosomes are condensed and aligned at the metaphase plate, CDK1 activity is switched off by WEE1- and PKMYT1-mediated phosphorylation to allow sister chromatid separation, chromosome decondensation, reformation of the nuclear envelope and cytokinesis. Phosphorylates KRT5 during prometaphase and metaphase. Inactivated by PKR/EIF2AK2- and WEE1-mediated phosphorylation upon DNA damage to stop cell cycle and genome replication at the G2 checkpoint thus facilitating DNA repair. Reactivated after successful DNA repair through WIP1-dependent signaling leading to CDC25A/B/C-mediated dephosphorylation and restoring cell cycle progression. Catalyzes lamin (LMNA, LMNB1 and LMNB2) phosphorylation at the onset of mitosis, promoting nuclear envelope breakdown. In proliferating cells, CDK1-mediated FOXO1 phosphorylation at the G2-M phase represses FOXO1 interaction with 14-3-3 proteins and thereby promotes FOXO1 nuclear accumulation and transcription factor activity, leading to cell death of postmitotic neurons. The phosphorylation of beta-tubulins regulates microtubule dynamics during mitosis. NEDD1 phosphorylation promotes PLK1-mediated NEDD1 phosphorylation and subsequent targeting of the gamma-tubulin ring complex (gTuRC) to the centrosome, an important step for spindle formation. In addition, CC2D1A phosphorylation regulates CC2D1A spindle pole localization and association with SCC1/RAD21 and centriole cohesion during mitosis. The phosphorylation of Bcl-xL/BCL2L1 after prolongated G2 arrest upon DNA damage triggers apoptosis. In contrast, CASP8 phosphorylation during mitosis prevents its activation by proteolysis and subsequent apoptosis. This phosphorylation occurs in cancer cell lines, as well as in primary breast tissues and lymphocytes. EZH2 phosphorylation promotes H3K27me3 maintenance and epigenetic gene silencing. CALD1 phosphorylation promotes Schwann cell migration during peripheral nerve regeneration. CDK1-cyclin-B complex phosphorylates NCKAP5L and mediates its dissociation from centrosomes during mitosis. Regulates the amplitude of the cyclic expression of the core clock gene BMAL1 by phosphorylating its transcriptional repressor NR1D1, and this phosphorylation is necessary for SCF(FBXW7)-mediated ubiquitination and proteasomal degradation of NR1D1. Phosphorylates EML3 at 'Thr-881' which is essential for its interaction with HAUS augmin-like complex and TUBG1. Phosphorylates CGAS during mitosis, leading to its inhibition, thereby preventing CGAS activation by self DNA during mitosis. Phosphorylates SKA3 on multiple sites during mitosis which promotes SKA3 binding to the NDC80 complex and anchoring of the SKA complex to kinetochores, to enable stable attachment of mitotic spindle microtubules to kinetochores. (Microbial infection) Acts as a receptor for hepatitis C virus (HCV) in hepatocytes and facilitates its cell entry. The polypeptide is Cyclin-dependent kinase 1 (CDK1) (Homo sapiens (Human)).